Here is a 391-residue protein sequence, read N- to C-terminus: Phosphoglycerate kinase (391 aa).

Residues 21 to 23 (DLN), R36, 59 to 62 (HLGR), R113, and R146 each bind substrate. ATP contacts are provided by residues K197, E319, and 345-348 (GGDT).

It belongs to the phosphoglycerate kinase family. As to quaternary structure, monomer.

It is found in the cytoplasm. It catalyses the reaction (2R)-3-phosphoglycerate + ATP = (2R)-3-phospho-glyceroyl phosphate + ADP. It functions in the pathway carbohydrate degradation; glycolysis; pyruvate from D-glyceraldehyde 3-phosphate: step 2/5. This is Phosphoglycerate kinase from Shewanella sp. (strain MR-7).